The following is a 266-amino-acid chain: Interleukin-1 beta (266 aa).

The propeptide occupies 1–114 (MAAVPELSSE…DTWDEEYESD (114 aa)).

Belongs to the IL-1 family. Monomer. In its precursor form, weakly interacts with full-length MEFV; the mature cytokine does not interact at all. Interacts with integrins ITGAV:ITGBV and ITGA5:ITGB1; integrin-binding is required for IL1B signaling. Interacts with cargo receptor TMED10; the interaction is direct and is required for the secretion of IL1B mature form. Interacts with HSP90AB1; the interaction facilitates cargo translocation into the ERGIC. Interacts with HSP90B1; the interaction facilitates cargo translocation into the ERGIC.

The protein resides in the cytoplasm. It localises to the cytosol. It is found in the secreted. The protein localises to the lysosome. Its subcellular location is the extracellular exosome. Its function is as follows. Potent pro-inflammatory cytokine. Initially discovered as the major endogenous pyrogen, induces prostaglandin synthesis, neutrophil influx and activation, T-cell activation and cytokine production, B-cell activation and antibody production, and fibroblast proliferation and collagen production. Promotes Th17 differentiation of T-cells. Synergizes with IL12/interleukin-12 to induce IFNG synthesis from T-helper 1 (Th1) cells. Plays a role in angiogenesis by inducing VEGF production synergistically with TNF and IL6. Involved in transduction of inflammation downstream of pyroptosis: its mature form is specifically released in the extracellular milieu by passing through the gasdermin-D (GSDMD) pore. The chain is Interleukin-1 beta (IL1B) from Cavia porcellus (Guinea pig).